The following is a 291-amino-acid chain: 33 kDa chaperonin (291 aa).

Disulfide bonds link Cys-237/Cys-239 and Cys-270/Cys-273.

The protein belongs to the HSP33 family. Post-translationally, under oxidizing conditions two disulfide bonds are formed involving the reactive cysteines. Under reducing conditions zinc is bound to the reactive cysteines and the protein is inactive.

The protein localises to the cytoplasm. Redox regulated molecular chaperone. Protects both thermally unfolding and oxidatively damaged proteins from irreversible aggregation. Plays an important role in the bacterial defense system toward oxidative stress. The sequence is that of 33 kDa chaperonin from Bacillus anthracis (strain A0248).